The chain runs to 160 residues: Prostaglandin E synthase 3 (160 aa).

The region spanning 1 to 90 is the CS domain; the sequence is MQPASAKWYD…ESGQSWPRLT (90 aa). Position 33 is an N6-acetyllysine (Lys33). Lys35 participates in a covalent cross-link: Glycyl lysine isopeptide (Lys-Gly) (interchain with G-Cter in SUMO2). Position 44 is a phosphoserine (Ser44). A Glycyl lysine isopeptide (Lys-Gly) (interchain with G-Cter in SUMO2) cross-link involves residue Lys65. Phosphoserine occurs at positions 85, 100, 113, and 118. The segment at 118-160 is disordered; it reads SNFDRFSEMMDHMGGDEDVDLPEVDGADDDSQDSDDEKMPDLE. Over residues 122–132 the composition is skewed to basic and acidic residues; sequence RFSEMMDHMGG. A compositionally biased stretch (acidic residues) spans 133 to 153; the sequence is DEDVDLPEVDGADDDSQDSDD. 2 positions are modified to phosphoserine: Ser148 and Ser151. The short motif at 157-160 is the PXLE motif element; that stretch reads PDLE.

Belongs to the p23/wos2 family. In terms of assembly, probably forms a complex composed of chaperones HSP90 and HSP70, co-chaperones STIP1/HOP, CDC37, PPP5C, PTGES3/p23, TSC1 and client protein TSC2. Binds to the progesterone receptor. Interacts with TERT; the interaction, together with HSP90AA1, is required for correct assembly and stabilization of the telomerase holoenzyme complex. Interacts (via PXLE motif) with EGLN1/PHD2, recruiting EGLN1/PHD2 to the HSP90 pathway to facilitate HIF alpha proteins hydroxylation. Interacts with HSP90AA1, FLCN, FNIP1 and FNIP2. Proteolytically cleaved by caspase-7 (CASP7) in response to apoptosis, leading to its inactivation. As to expression, expressed in testis, kidney, bladder and ovary.

Its subcellular location is the cytoplasm. The catalysed reaction is prostaglandin H2 = prostaglandin E2. It participates in lipid metabolism; prostaglandin biosynthesis. Its function is as follows. Cytosolic prostaglandin synthase that catalyzes the oxidoreduction of prostaglandin endoperoxide H2 (PGH2) to prostaglandin E2 (PGE2). Molecular chaperone that localizes to genomic response elements in a hormone-dependent manner and disrupts receptor-mediated transcriptional activation, by promoting disassembly of transcriptional regulatory complexes. Facilitates HIF alpha proteins hydroxylation via interaction with EGLN1/PHD2, leading to recruit EGLN1/PHD2 to the HSP90 pathway. This is Prostaglandin E synthase 3 (Ptges3) from Mus musculus (Mouse).